We begin with the raw amino-acid sequence, 91 residues long: YcgL domain-containing protein Ent638_2370 (91 aa).

Positions 1–85 (MFCVIYRSAK…PPENLLKQHL (85 aa)) constitute a YcgL domain.

This Enterobacter sp. (strain 638) protein is YcgL domain-containing protein Ent638_2370.